The chain runs to 468 residues: 6-phospho-beta-galactosidase (468 aa).

Glutamine 19, histidine 116, asparagine 159, glutamate 160, and asparagine 297 together coordinate D-galactose 6-phosphate. The Proton donor role is filled by glutamate 160. Glutamate 375 serves as the catalytic Nucleophile. D-galactose 6-phosphate is bound by residues serine 428, tryptophan 429, lysine 435, and tyrosine 437.

It belongs to the glycosyl hydrolase 1 family.

The catalysed reaction is a 6-phospho-beta-D-galactoside + H2O = D-galactose 6-phosphate + an alcohol. Its pathway is carbohydrate metabolism; lactose degradation; D-galactose 6-phosphate and beta-D-glucose from lactose 6-phosphate: step 1/1. This Streptococcus uberis (strain ATCC BAA-854 / 0140J) protein is 6-phospho-beta-galactosidase.